We begin with the raw amino-acid sequence, 447 residues long: NADP-specific glutamate dehydrogenase (447 aa).

Substrate is bound by residues lysine 92, glutamine 113, and lysine 116. Lysine 128 (proton donor) is an active-site residue. A substrate-binding site is contributed by glycine 167. Positions 211 and 242 each coordinate NADP(+). Serine 380 serves as a coordination point for substrate.

Belongs to the Glu/Leu/Phe/Val dehydrogenases family. Homohexamer.

It carries out the reaction L-glutamate + NADP(+) + H2O = 2-oxoglutarate + NH4(+) + NADPH + H(+). Functionally, catalyzes the reversible oxidative deamination of glutamate to alpha-ketoglutarate and ammonia. The sequence is that of NADP-specific glutamate dehydrogenase (gdhA) from Salmonella typhimurium (strain LT2 / SGSC1412 / ATCC 700720).